The chain runs to 131 residues: Small ribosomal subunit protein uS11 (131 aa).

This sequence belongs to the universal ribosomal protein uS11 family. As to quaternary structure, part of the 30S ribosomal subunit. Interacts with proteins S7 and S18. Binds to IF-3.

Its function is as follows. Located on the platform of the 30S subunit, it bridges several disparate RNA helices of the 16S rRNA. Forms part of the Shine-Dalgarno cleft in the 70S ribosome. The sequence is that of Small ribosomal subunit protein uS11 from Syntrophotalea carbinolica (strain DSM 2380 / NBRC 103641 / GraBd1) (Pelobacter carbinolicus).